A 167-amino-acid polypeptide reads, in one-letter code: Peptide deformylase (167 aa).

Positions 90 and 132 each coordinate Fe cation. Glu133 is an active-site residue. His136 is a Fe cation binding site.

The protein belongs to the polypeptide deformylase family. Requires Fe(2+) as cofactor.

The enzyme catalyses N-terminal N-formyl-L-methionyl-[peptide] + H2O = N-terminal L-methionyl-[peptide] + formate. Functionally, removes the formyl group from the N-terminal Met of newly synthesized proteins. Requires at least a dipeptide for an efficient rate of reaction. N-terminal L-methionine is a prerequisite for activity but the enzyme has broad specificity at other positions. The polypeptide is Peptide deformylase (Dehalococcoides mccartyi (strain ATCC BAA-2100 / JCM 16839 / KCTC 5957 / BAV1)).